We begin with the raw amino-acid sequence, 453 residues long: Pup--protein ligase (453 aa).

Residue Glu-9 coordinates Mg(2+). An ATP-binding site is contributed by Arg-53. Tyr-55 provides a ligand contact to Mg(2+). Residue Asp-57 is the Proton acceptor of the active site. Glu-63 contacts Mg(2+). Residues Thr-66 and Trp-420 each coordinate ATP.

This sequence belongs to the Pup ligase/Pup deamidase family. Pup-conjugating enzyme subfamily.

It catalyses the reaction ATP + [prokaryotic ubiquitin-like protein]-L-glutamate + [protein]-L-lysine = ADP + phosphate + N(6)-([prokaryotic ubiquitin-like protein]-gamma-L-glutamyl)-[protein]-L-lysine.. The protein operates within protein degradation; proteasomal Pup-dependent pathway. It participates in protein modification; protein pupylation. In terms of biological role, catalyzes the covalent attachment of the prokaryotic ubiquitin-like protein modifier Pup to the proteasomal substrate proteins, thereby targeting them for proteasomal degradation. This tagging system is termed pupylation. The ligation reaction involves the side-chain carboxylate of the C-terminal glutamate of Pup and the side-chain amino group of a substrate lysine. The protein is Pup--protein ligase of Kribbella flavida (strain DSM 17836 / JCM 10339 / NBRC 14399).